A 105-amino-acid chain; its full sequence is Protein LBH (105 aa).

Residues 18–104 form the LBH domain; the sequence is MTEVMMNTQP…CEETAKENKE (87 aa). Position 63 is a phosphoserine (Ser-63). Residues 86 to 96 are compositionally biased toward acidic residues; it reads LVQEDEQDNCE. The interval 86-105 is disordered; the sequence is LVQEDEQDNCEETAKENKEQ.

This sequence belongs to the LBH family. As to expression, highly expressed in heart, and expressed at low levels in placenta, lung, skeletal muscle, kidney and liver.

It is found in the nucleus. Its subcellular location is the cytoplasm. Transcriptional activator which may act in mitogen-activated protein kinase signaling pathway. The sequence is that of Protein LBH from Homo sapiens (Human).